A 155-amino-acid polypeptide reads, in one-letter code: Small ribosomal subunit protein uS7 (155 aa).

It belongs to the universal ribosomal protein uS7 family. As to quaternary structure, part of the 30S ribosomal subunit. Contacts proteins S9 and S11.

Functionally, one of the primary rRNA binding proteins, it binds directly to 16S rRNA where it nucleates assembly of the head domain of the 30S subunit. Is located at the subunit interface close to the decoding center, probably blocks exit of the E-site tRNA. The polypeptide is Small ribosomal subunit protein uS7 (Chlorobium luteolum (strain DSM 273 / BCRC 81028 / 2530) (Pelodictyon luteolum)).